The following is a 369-amino-acid chain: 3',5'-cyclic-nucleotide phosphodiesterase 1 (369 aa).

This sequence belongs to the cyclic nucleotide phosphodiesterase class-II family.

The catalysed reaction is a nucleoside 3',5'-cyclic phosphate + H2O = a nucleoside 5'-phosphate + H(+). Controls the level of cAMP in yeast cells, together with the high-affinity cAMP phosphodiesterase (PDE2). The protein is 3',5'-cyclic-nucleotide phosphodiesterase 1 (PDE1) of Saccharomyces cerevisiae (strain ATCC 204508 / S288c) (Baker's yeast).